The sequence spans 77 residues: Putative sulfur carrier protein YedF (77 aa).

Cysteine 17 (cysteine persulfide intermediate) is an active-site residue.

The protein belongs to the sulfur carrier protein TusA family.

This is Putative sulfur carrier protein YedF (yedF) from Escherichia coli O157:H7.